The following is a 143-amino-acid chain: MARVMTRGMARVSTLATVRVSTLARARFSVRDSFMVSVIVGVRVRVDVLVRVNVLVRARPRVRVRARPRVRVRVRARPRVRVRVRASPRVRVRVITPPFFSPPGGFDVIFKTRGIPSPGETVLDKKVSRPWRGLTSRRGATMI.

A signal peptide spans 1 to 26 (MARVMTRGMARVSTLATVRVSTLARA).

This Human herpesvirus 6A (strain Uganda-1102) (HHV-6 variant A) protein is Protein RJ1 (RJ1).